Here is a 98-residue protein sequence, read N- to C-terminus: Citrate lyase acyl carrier protein (98 aa).

At Ser-14 the chain carries O-(phosphoribosyl dephospho-coenzyme A)serine.

Belongs to the CitD family. As to quaternary structure, oligomer with a subunit composition of (alpha,beta,gamma)6.

The protein localises to the cytoplasm. Covalent carrier of the coenzyme of citrate lyase. This is Citrate lyase acyl carrier protein from Shigella boydii serotype 18 (strain CDC 3083-94 / BS512).